A 139-amino-acid chain; its full sequence is ATP synthase epsilon chain (139 aa).

Belongs to the ATPase epsilon chain family. In terms of assembly, F-type ATPases have 2 components, CF(1) - the catalytic core - and CF(0) - the membrane proton channel. CF(1) has five subunits: alpha(3), beta(3), gamma(1), delta(1), epsilon(1). CF(0) has three main subunits: a, b and c.

It localises to the cell inner membrane. Functionally, produces ATP from ADP in the presence of a proton gradient across the membrane. In Pseudomonas putida (strain W619), this protein is ATP synthase epsilon chain.